The chain runs to 236 residues: 2,3,4,5-tetrahydropyridine-2,6-dicarboxylate N-acetyltransferase (236 aa).

The protein belongs to the transferase hexapeptide repeat family. DapH subfamily.

It carries out the reaction (S)-2,3,4,5-tetrahydrodipicolinate + acetyl-CoA + H2O = L-2-acetamido-6-oxoheptanedioate + CoA. The protein operates within amino-acid biosynthesis; L-lysine biosynthesis via DAP pathway; LL-2,6-diaminopimelate from (S)-tetrahydrodipicolinate (acetylase route): step 1/3. Functionally, catalyzes the transfer of an acetyl group from acetyl-CoA to tetrahydrodipicolinate. This Thermotoga maritima (strain ATCC 43589 / DSM 3109 / JCM 10099 / NBRC 100826 / MSB8) protein is 2,3,4,5-tetrahydropyridine-2,6-dicarboxylate N-acetyltransferase.